A 557-amino-acid chain; its full sequence is DNA ligase (557 aa).

E249 serves as a coordination point for ATP. K251 functions as the N6-AMP-lysine intermediate in the catalytic mechanism. 6 residues coordinate ATP: R256, R271, E301, F340, R417, and K423.

Belongs to the ATP-dependent DNA ligase family. The cofactor is Mg(2+).

The enzyme catalyses ATP + (deoxyribonucleotide)n-3'-hydroxyl + 5'-phospho-(deoxyribonucleotide)m = (deoxyribonucleotide)n+m + AMP + diphosphate.. Functionally, DNA ligase that seals nicks in double-stranded DNA during DNA replication, DNA recombination and DNA repair. The chain is DNA ligase from Methanothermobacter thermautotrophicus (Methanobacterium thermoformicicum).